The chain runs to 291 residues: 2-C-methyl-D-erythritol 4-phosphate cytidylyltransferase (291 aa).

Residues 1–23 form a disordered region; that stretch reads MTERDFDTPVETPTVQPAPAQGA.

This sequence belongs to the IspD/TarI cytidylyltransferase family. IspD subfamily.

The enzyme catalyses 2-C-methyl-D-erythritol 4-phosphate + CTP + H(+) = 4-CDP-2-C-methyl-D-erythritol + diphosphate. It participates in isoprenoid biosynthesis; isopentenyl diphosphate biosynthesis via DXP pathway; isopentenyl diphosphate from 1-deoxy-D-xylulose 5-phosphate: step 2/6. In terms of biological role, catalyzes the formation of 4-diphosphocytidyl-2-C-methyl-D-erythritol from CTP and 2-C-methyl-D-erythritol 4-phosphate (MEP). This Bifidobacterium longum (strain NCC 2705) protein is 2-C-methyl-D-erythritol 4-phosphate cytidylyltransferase.